Reading from the N-terminus, the 1063-residue chain is Cobalt-zinc-cadmium resistance protein CzcA (1063 aa).

12 helical membrane passes run tryptophan 14–leucine 34, glycine 350–isoleucine 370, threonine 371–isoleucine 391, leucine 395–glutamate 415, leucine 452–valine 472, alanine 487–isoleucine 507, leucine 534–isoleucine 554, valine 883–isoleucine 903, glycine 906–isoleucine 926, valine 937–isoleucine 957, proline 981–glycine 1001, and valine 1013–tyrosine 1033. The segment at aspartate 1040 to alanine 1063 is disordered. Over residues proline 1049 to alanine 1063 the composition is skewed to polar residues.

This sequence belongs to the resistance-nodulation-cell division (RND) (TC 2.A.6) family.

It is found in the cell inner membrane. Its function is as follows. Has a low cation transport activity for cobalt, it is essential for the expression of cobalt, zinc, and cadmium resistance. CzcA and CzcB together would act in zinc efflux nearly as effectively as the complete CZC efflux system (CzcABC). This chain is Cobalt-zinc-cadmium resistance protein CzcA (czcA), found in Cupriavidus metallidurans (strain ATCC 43123 / DSM 2839 / NBRC 102507 / CH34) (Ralstonia metallidurans).